Here is a 216-residue protein sequence, read N- to C-terminus: DNA gyrase subunit B (216 aa).

Positions 140-216 (SELYLVEGDS…PDKLRYHKII (77 aa)) constitute a Toprim domain.

Belongs to the type II topoisomerase GyrB family. Heterotetramer, composed of two GyrA and two GyrB chains. In the heterotetramer, GyrA contains the active site tyrosine that forms a transient covalent intermediate with DNA, while GyrB binds cofactors and catalyzes ATP hydrolysis.

The protein localises to the cytoplasm. The catalysed reaction is ATP-dependent breakage, passage and rejoining of double-stranded DNA.. Its function is as follows. A type II topoisomerase that negatively supercoils closed circular double-stranded (ds) DNA in an ATP-dependent manner to modulate DNA topology and maintain chromosomes in an underwound state. Negative supercoiling favors strand separation, and DNA replication, transcription, recombination and repair, all of which involve strand separation. Also able to catalyze the interconversion of other topological isomers of dsDNA rings, including catenanes and knotted rings. Type II topoisomerases break and join 2 DNA strands simultaneously in an ATP-dependent manner. The polypeptide is DNA gyrase subunit B (gyrB) (Acinetobacter sp. (strain ATCC 33308 / BD413 ErpE27)).